The sequence spans 590 residues: Putative laccase-19 (590 aa).

A signal peptide spans 1-28 (MEKLSMVTSLLCAITVAVLAVAVVSGEA). Plastocyanin-like domains follow at residues 36–152 (VVHE…PRDG) and 161–315 (KDVP…YAGA). Residues N41 and N47 are each glycosylated (N-linked (GlcNAc...) asparagine). Cu cation is bound by residues H86 and H88. N120 carries N-linked (GlcNAc...) asparagine glycosylation. The Cu cation site is built by H131 and H133. 6 N-linked (GlcNAc...) asparagine glycosylation sites follow: N205, N344, N378, N397, N434, and N465. The Plastocyanin-like 3 domain maps to 424–566 (DFPIRPPRPF…ATAFIVEDGP (143 aa)). Cu cation is bound by residues N483, H486, H488, H545, C546, H547, H551, and M556. The segment at 565–590 (GPTPETSLPPPPPEFKRCGNNGLSQP) is disordered.

Belongs to the multicopper oxidase family. Cu cation is required as a cofactor.

The protein resides in the secreted. Its subcellular location is the extracellular space. It is found in the apoplast. It catalyses the reaction 4 hydroquinone + O2 = 4 benzosemiquinone + 2 H2O. Its function is as follows. Lignin degradation and detoxification of lignin-derived products. The sequence is that of Putative laccase-19 (LAC19) from Oryza sativa subsp. indica (Rice).